We begin with the raw amino-acid sequence, 96 residues long: Aspartyl/glutamyl-tRNA(Asn/Gln) amidotransferase subunit C (96 aa).

It belongs to the GatC family. As to quaternary structure, heterotrimer of A, B and C subunits.

It catalyses the reaction L-glutamyl-tRNA(Gln) + L-glutamine + ATP + H2O = L-glutaminyl-tRNA(Gln) + L-glutamate + ADP + phosphate + H(+). The enzyme catalyses L-aspartyl-tRNA(Asn) + L-glutamine + ATP + H2O = L-asparaginyl-tRNA(Asn) + L-glutamate + ADP + phosphate + 2 H(+). Its function is as follows. Allows the formation of correctly charged Asn-tRNA(Asn) or Gln-tRNA(Gln) through the transamidation of misacylated Asp-tRNA(Asn) or Glu-tRNA(Gln) in organisms which lack either or both of asparaginyl-tRNA or glutaminyl-tRNA synthetases. The reaction takes place in the presence of glutamine and ATP through an activated phospho-Asp-tRNA(Asn) or phospho-Glu-tRNA(Gln). This is Aspartyl/glutamyl-tRNA(Asn/Gln) amidotransferase subunit C from Herpetosiphon aurantiacus (strain ATCC 23779 / DSM 785 / 114-95).